The following is a 419-amino-acid chain: L-rhamnose isomerase (419 aa).

Residues His262, Asp294, and Asp296 each coordinate Mn(2+).

This sequence belongs to the rhamnose isomerase family. In terms of assembly, homotetramer. The cofactor is Mn(2+).

It localises to the cytoplasm. The catalysed reaction is L-rhamnopyranose = L-rhamnulose. It functions in the pathway carbohydrate degradation; L-rhamnose degradation; glycerone phosphate from L-rhamnose: step 1/3. Functionally, catalyzes the interconversion of L-rhamnose and L-rhamnulose. In Escherichia coli O139:H28 (strain E24377A / ETEC), this protein is L-rhamnose isomerase.